A 198-amino-acid chain; its full sequence is Small ribosomal subunit protein uS7 (198 aa).

This sequence belongs to the universal ribosomal protein uS7 family. Part of the 30S ribosomal subunit.

In terms of biological role, one of the primary rRNA binding proteins, it binds directly to 16S rRNA where it nucleates assembly of the head domain of the 30S subunit. Is located at the subunit interface close to the decoding center. In Desulfurococcus amylolyticus (strain DSM 18924 / JCM 16383 / VKM B-2413 / 1221n) (Desulfurococcus kamchatkensis), this protein is Small ribosomal subunit protein uS7.